Reading from the N-terminus, the 127-residue chain is Holo-[acyl-carrier-protein] synthase (127 aa).

Mg(2+) contacts are provided by D8 and E57.

This sequence belongs to the P-Pant transferase superfamily. AcpS family. Requires Mg(2+) as cofactor.

It is found in the cytoplasm. The enzyme catalyses apo-[ACP] + CoA = holo-[ACP] + adenosine 3',5'-bisphosphate + H(+). Transfers the 4'-phosphopantetheine moiety from coenzyme A to a Ser of acyl-carrier-protein. The polypeptide is Holo-[acyl-carrier-protein] synthase (Hydrogenovibrio crunogenus (strain DSM 25203 / XCL-2) (Thiomicrospira crunogena)).